The chain runs to 260 residues: Imidazole glycerol phosphate synthase subunit HisF (260 aa).

Active-site residues include aspartate 11 and aspartate 130.

It belongs to the HisA/HisF family. Heterodimer of HisH and HisF.

The protein localises to the cytoplasm. The catalysed reaction is 5-[(5-phospho-1-deoxy-D-ribulos-1-ylimino)methylamino]-1-(5-phospho-beta-D-ribosyl)imidazole-4-carboxamide + L-glutamine = D-erythro-1-(imidazol-4-yl)glycerol 3-phosphate + 5-amino-1-(5-phospho-beta-D-ribosyl)imidazole-4-carboxamide + L-glutamate + H(+). The protein operates within amino-acid biosynthesis; L-histidine biosynthesis; L-histidine from 5-phospho-alpha-D-ribose 1-diphosphate: step 5/9. Functionally, IGPS catalyzes the conversion of PRFAR and glutamine to IGP, AICAR and glutamate. The HisF subunit catalyzes the cyclization activity that produces IGP and AICAR from PRFAR using the ammonia provided by the HisH subunit. The chain is Imidazole glycerol phosphate synthase subunit HisF from Psychrobacter arcticus (strain DSM 17307 / VKM B-2377 / 273-4).